Consider the following 243-residue polypeptide: Carboxy-S-adenosyl-L-methionine synthase (243 aa).

S-adenosyl-L-methionine-binding positions include Tyr-39, 64-66, 89-90, 117-118, Asn-132, and Arg-199; these read GCS, DN, and DL.

It belongs to the class I-like SAM-binding methyltransferase superfamily. Cx-SAM synthase family. Homodimer.

The catalysed reaction is prephenate + S-adenosyl-L-methionine = carboxy-S-adenosyl-L-methionine + 3-phenylpyruvate + H2O. Catalyzes the conversion of S-adenosyl-L-methionine (SAM) to carboxy-S-adenosyl-L-methionine (Cx-SAM). This chain is Carboxy-S-adenosyl-L-methionine synthase, found in Pseudoalteromonas atlantica (strain T6c / ATCC BAA-1087).